Here is a 246-residue protein sequence, read N- to C-terminus: Ly6/PLAUR domain-containing protein 4 (246 aa).

A signal peptide spans 1–26 (MGPQHLRLVQLFCLLGAISTLPRAGA). N-linked (GlcNAc...) asparagine glycosylation is present at Asn117. In terms of domain architecture, UPAR/Ly6 spans 142–223 (CPTCVGEHMK…LNILEKSQIV (82 aa)). The GPI-anchor amidated alanine moiety is linked to residue Ala225. The propeptide at 226 to 246 (ASSRQDPAWGVVLGLLFAFRD) is removed in mature form.

The protein resides in the cell membrane. This chain is Ly6/PLAUR domain-containing protein 4 (LYPD4), found in Homo sapiens (Human).